The chain runs to 662 residues: UvrABC system protein B (662 aa).

The Helicase ATP-binding domain occupies 25–412 (EGVRRGYRYQ…SEQVVEQLIR (388 aa)). 38–45 (GVTGSGKT) contacts ATP. A Beta-hairpin motif is present at residues 91–114 (YYDYYQPEAYVPETDTYIEKDASI). Residues 429–595 (QVDDLIAEIR…TVVKGVRDVI (167 aa)) form the Helicase C-terminal domain. Positions 620–655 (KSTIEQLEKEMRQAAIELQFEKAAKLRDMILELRKQ) constitute a UVR domain.

This sequence belongs to the UvrB family. As to quaternary structure, forms a heterotetramer with UvrA during the search for lesions. Interacts with UvrC in an incision complex.

Its subcellular location is the cytoplasm. The UvrABC repair system catalyzes the recognition and processing of DNA lesions. A damage recognition complex composed of 2 UvrA and 2 UvrB subunits scans DNA for abnormalities. Upon binding of the UvrA(2)B(2) complex to a putative damaged site, the DNA wraps around one UvrB monomer. DNA wrap is dependent on ATP binding by UvrB and probably causes local melting of the DNA helix, facilitating insertion of UvrB beta-hairpin between the DNA strands. Then UvrB probes one DNA strand for the presence of a lesion. If a lesion is found the UvrA subunits dissociate and the UvrB-DNA preincision complex is formed. This complex is subsequently bound by UvrC and the second UvrB is released. If no lesion is found, the DNA wraps around the other UvrB subunit that will check the other stand for damage. In Caldanaerobacter subterraneus subsp. tengcongensis (strain DSM 15242 / JCM 11007 / NBRC 100824 / MB4) (Thermoanaerobacter tengcongensis), this protein is UvrABC system protein B.